The chain runs to 398 residues: MASAVQKSALLLCGDYMEAYETIVPLYVLQSFGVSVHCVSPNRNAGDRCVMSAHDFLGLELYTELVVDQLTLNANFDDVTPENYDVIIIPGGRFTELLSADEKCVDLVARFAESKKLIFTSCHSQVMLMAAGILAGGVKCTAFESIKPLIELSGGEWWQQPGIQSMFEITDCVKDGNFMSTVGWPTLGHGIKLLLESLGGKVCSLEKKQASVLFLIGDYVEDYGINVPFRALQALGCKVDAVTPNKKKGEVCATAVYDLEDGRQIPAEKRGHNFFVTASWDDICVDDYDCVVVPGGRSPELLVMNEKAVALVKSFAEKDKVFAAIGQGKLLLAATGVLKGKRCASGKGMKVMVKVAGGEAVMEKGCVTDGKVVTAASATDLPAFLFDLSTALGLTVMF.

PfpI endopeptidase domains are found at residues 7–199 and 210–393; these read KSAL…ESLG and ASVL…TALG.

This sequence belongs to the peptidase C56 family. Homotrimer. As to expression, expressed in roots and cauline leaves.

Functionally, may be involved in oxidative stress response. The protein is DJ-1 protein homolog E (DJ1E) of Arabidopsis thaliana (Mouse-ear cress).